The sequence spans 424 residues: MRVAMISMHTSPLQQPGVGDSGGMNVYILSTGTELARQGVEVDIFTRATRPSQGEVVQVAPNLRVINIVAGPYEGLAKEELSTQLAAFAGGVLEFTRRGGIEYDLIHSHYWLSGQVGWLMRDLWRIPLVHTAHTLAAVKNSYRADEDTPESEARRICEQQLVDNADVLAVNTQEELADLVHHYDADPDRISVVSPGADIALYTPGNDRATERSRRELGVPLHAKVVAFVGRLQPFKGPQVLIHAVAELLERDPQRNLRVLICGGPSGPSATPETYRNLAVELGVDKRIRFLDPRPPEELVAVYRAADIIAVPSYNESFGLVAMEAQATGTPVVAARVGGLPVAVAEGETGLLVDGHDPALWADTLATLLDDDETRIRMGQDAVEHARNFSWAATATQLSSLYSEATTAECDGGIPRRADGARWD.

Residue His-9 participates in 1D-myo-inositol 3-phosphate binding. Residues Gln-15 to Pro-16 and Gly-23 each bind UDP-N-acetyl-alpha-D-glucosamine. Residues Asp-20–Asn-25, Lys-78, Tyr-110, Thr-134, and Arg-154 contribute to the 1D-myo-inositol 3-phosphate site. Arg-231, Lys-236, and Arg-294 together coordinate UDP-N-acetyl-alpha-D-glucosamine. Mg(2+) contacts are provided by Tyr-303, Arg-304, and Ala-306. Positions 316 and 324 each coordinate UDP-N-acetyl-alpha-D-glucosamine. A Mg(2+)-binding site is contributed by Thr-330.

It belongs to the glycosyltransferase group 1 family. MshA subfamily. Homodimer.

The enzyme catalyses 1D-myo-inositol 3-phosphate + UDP-N-acetyl-alpha-D-glucosamine = 1D-myo-inositol 2-acetamido-2-deoxy-alpha-D-glucopyranoside 3-phosphate + UDP + H(+). Catalyzes the transfer of a N-acetyl-glucosamine moiety to 1D-myo-inositol 3-phosphate to produce 1D-myo-inositol 2-acetamido-2-deoxy-glucopyranoside 3-phosphate in the mycothiol biosynthesis pathway. This is D-inositol 3-phosphate glycosyltransferase from Corynebacterium efficiens (strain DSM 44549 / YS-314 / AJ 12310 / JCM 11189 / NBRC 100395).